A 1236-amino-acid polypeptide reads, in one-letter code: DNA topoisomerase 2 (1236 aa).

Residues Asn65, Asn96, 124-126 (SSN), 137-144 (GRHGYGAK), and 354-356 (QSK) contribute to the ATP site. Residues 434-548 (RTLIITEGDS…KLLQNNPGYI (115 aa)) enclose the Toprim domain. Residues Glu440, Asp517, and Asp519 each contribute to the Mg(2+) site. Residues 685 to 1101 (IPHCVDGLKP…TPVKMWLTEL (417 aa)) form the Topo IIA-type catalytic domain. Tyr775 functions as the O-(5'-phospho-DNA)-tyrosine intermediate in the catalytic mechanism. An interaction with DNA region spans residues 956–965 (ALAQRIYING). Residues 1161 to 1211 (YEKPPPSKRRPGESVGGARPSDSAARTVGKRLVGSRSEFKNKKPMSRKNNV) form a disordered region.

It belongs to the type II topoisomerase family. In terms of assembly, homodimer. It depends on Mg(2+) as a cofactor. Requires Mn(2+) as cofactor. Ca(2+) serves as cofactor.

It localises to the nucleus. It catalyses the reaction ATP-dependent breakage, passage and rejoining of double-stranded DNA.. Its function is as follows. Control of topological states of DNA by transient breakage and subsequent rejoining of DNA strands. Topoisomerase II makes double-strand breaks. In Leishmania chagasi, this protein is DNA topoisomerase 2 (TOP2).